A 64-amino-acid chain; its full sequence is uncharacterized protein (64 aa).

This is an uncharacterized protein from African swine fever virus (strain Badajoz 1971 Vero-adapted) (Ba71V).